A 120-amino-acid polypeptide reads, in one-letter code: Peptidyl-tRNA hydrolase (120 aa).

This sequence belongs to the PTH2 family.

Its subcellular location is the cytoplasm. It catalyses the reaction an N-acyl-L-alpha-aminoacyl-tRNA + H2O = an N-acyl-L-amino acid + a tRNA + H(+). The natural substrate for this enzyme may be peptidyl-tRNAs which drop off the ribosome during protein synthesis. The protein is Peptidyl-tRNA hydrolase of Pyrobaculum aerophilum (strain ATCC 51768 / DSM 7523 / JCM 9630 / CIP 104966 / NBRC 100827 / IM2).